The sequence spans 241 residues: Probable transcriptional regulatory protein Rpic_2388 (241 aa).

This sequence belongs to the TACO1 family.

The protein localises to the cytoplasm. This is Probable transcriptional regulatory protein Rpic_2388 from Ralstonia pickettii (strain 12J).